Here is a 518-residue protein sequence, read N- to C-terminus: Integrator complex subunit 14 (518 aa).

The VWFA domain maps to 2–204 (PTVVVMDVSL…KNVQSMFGKL (203 aa)). Serine 10, serine 12, and threonine 86 together coordinate Mg(2+). The tract at residues 373–394 (SDAKENPYGDDDNKSPFPLQPK) is disordered. Over residues 374–386 (DAKENPYGDDDNK) the composition is skewed to basic and acidic residues.

This sequence belongs to the Integrator subunit 14 family. As to quaternary structure, component of the Integrator complex, composed of core subunits INTS1, INTS2, INTS3, INTS4, INTS5, INTS6, INTS7, INTS8, INTS9/RC74, INTS10, INTS11/CPSF3L, INTS12, INTS13, INTS14 and INTS15. The core complex associates with protein phosphatase 2A subunits PPP2CA and PPP2R1A, to form the Integrator-PP2A (INTAC) complex. INTS14 is part of the tail subcomplex, composed of INTS10, INTS13, INTS14 and INTS15.

It is found in the nucleus. Its function is as follows. Component of the integrator complex, a multiprotein complex that terminates RNA polymerase II (Pol II) transcription in the promoter-proximal region of genes. The integrator complex provides a quality checkpoint during transcription elongation by driving premature transcription termination of transcripts that are unfavorably configured for transcriptional elongation: the complex terminates transcription by (1) catalyzing dephosphorylation of the C-terminal domain (CTD) of Pol II subunit POLR2A/RPB1 and SUPT5H/SPT5, (2) degrading the exiting nascent RNA transcript via endonuclease activity and (3) promoting the release of Pol II from bound DNA. The integrator complex is also involved in terminating the synthesis of non-coding Pol II transcripts, such as enhancer RNAs (eRNAs), small nuclear RNAs (snRNAs), telomerase RNAs and long non-coding RNAs (lncRNAs). Within the integrator complex, INTS14 is part of the integrator tail module that acts as a platform for the recruitment of transcription factors at promoters. This is Integrator complex subunit 14 from Gallus gallus (Chicken).